The chain runs to 372 residues: Queuine tRNA-ribosyltransferase (372 aa).

The Proton acceptor role is filled by aspartate 89. Residues 89-93 (DSGGF), aspartate 143, glutamine 185, and glycine 212 each bind substrate. Residues 243 to 249 (GVGKPED) are RNA binding. The Nucleophile role is filled by aspartate 262. The segment at 267–271 (TRNAR) is RNA binding; important for wobble base 34 recognition. Positions 300, 302, 305, and 331 each coordinate Zn(2+).

It belongs to the queuine tRNA-ribosyltransferase family. In terms of assembly, homodimer. Within each dimer, one monomer is responsible for RNA recognition and catalysis, while the other monomer binds to the replacement base PreQ1. Zn(2+) is required as a cofactor.

The enzyme catalyses 7-aminomethyl-7-carbaguanine + guanosine(34) in tRNA = 7-aminomethyl-7-carbaguanosine(34) in tRNA + guanine. Its pathway is tRNA modification; tRNA-queuosine biosynthesis. Catalyzes the base-exchange of a guanine (G) residue with the queuine precursor 7-aminomethyl-7-deazaguanine (PreQ1) at position 34 (anticodon wobble position) in tRNAs with GU(N) anticodons (tRNA-Asp, -Asn, -His and -Tyr). Catalysis occurs through a double-displacement mechanism. The nucleophile active site attacks the C1' of nucleotide 34 to detach the guanine base from the RNA, forming a covalent enzyme-RNA intermediate. The proton acceptor active site deprotonates the incoming PreQ1, allowing a nucleophilic attack on the C1' of the ribose to form the product. After dissociation, two additional enzymatic reactions on the tRNA convert PreQ1 to queuine (Q), resulting in the hypermodified nucleoside queuosine (7-(((4,5-cis-dihydroxy-2-cyclopenten-1-yl)amino)methyl)-7-deazaguanosine). This is Queuine tRNA-ribosyltransferase from Chromohalobacter salexigens (strain ATCC BAA-138 / DSM 3043 / CIP 106854 / NCIMB 13768 / 1H11).